Here is a 132-residue protein sequence, read N- to C-terminus: ATP synthase epsilon chain (132 aa).

Over residues 88 to 102 (IDKERAEAARQRAQE) the composition is skewed to basic and acidic residues. The disordered stretch occupies residues 88–112 (IDKERAEAARQRAQERLNSQSDDTD).

The protein belongs to the ATPase epsilon chain family. In terms of assembly, F-type ATPases have 2 components, CF(1) - the catalytic core - and CF(0) - the membrane proton channel. CF(1) has five subunits: alpha(3), beta(3), gamma(1), delta(1), epsilon(1). CF(0) has three main subunits: a, b and c. The F(1)F(0) complex interacts with SpoIIIJ and YqjG; YqgA is found in the same complex.

It is found in the cell membrane. Its function is as follows. Produces ATP from ADP in the presence of a proton gradient across the membrane. The sequence is that of ATP synthase epsilon chain (atpC) from Bacillus subtilis (strain 168).